The primary structure comprises 429 residues: 5-methylthioadenosine/S-adenosylhomocysteine deaminase (429 aa).

Residues His-65 and His-67 each contribute to the Zn(2+) site. Positions 94 and 182 each coordinate substrate. His-209 lines the Zn(2+) pocket. Positions 212 and 297 each coordinate substrate. A Zn(2+)-binding site is contributed by Asp-297.

It belongs to the metallo-dependent hydrolases superfamily. MTA/SAH deaminase family. Requires Zn(2+) as cofactor.

It catalyses the reaction S-adenosyl-L-homocysteine + H2O + H(+) = S-inosyl-L-homocysteine + NH4(+). The enzyme catalyses S-methyl-5'-thioadenosine + H2O + H(+) = S-methyl-5'-thioinosine + NH4(+). Functionally, catalyzes the deamination of 5-methylthioadenosine and S-adenosyl-L-homocysteine into 5-methylthioinosine and S-inosyl-L-homocysteine, respectively. Is also able to deaminate adenosine. This chain is 5-methylthioadenosine/S-adenosylhomocysteine deaminase, found in Clostridium tetani (strain Massachusetts / E88).